Reading from the N-terminus, the 142-residue chain is Ribosome-binding factor A (142 aa).

Residues 120 to 130 (EVRRDIDHAPA) are compositionally biased toward basic and acidic residues. Residues 120 to 142 (EVRRDIDHAPAEDEFPTDGDDGQ) form a disordered region. Over residues 131 to 142 (EDEFPTDGDDGQ) the composition is skewed to acidic residues.

Belongs to the RbfA family. Monomer. Binds 30S ribosomal subunits, but not 50S ribosomal subunits or 70S ribosomes.

The protein localises to the cytoplasm. Its function is as follows. One of several proteins that assist in the late maturation steps of the functional core of the 30S ribosomal subunit. Associates with free 30S ribosomal subunits (but not with 30S subunits that are part of 70S ribosomes or polysomes). Required for efficient processing of 16S rRNA. May interact with the 5'-terminal helix region of 16S rRNA. The chain is Ribosome-binding factor A from Paramagnetospirillum magneticum (strain ATCC 700264 / AMB-1) (Magnetospirillum magneticum).